A 372-amino-acid chain; its full sequence is MVAVARGTLRRTPLYEEHRALGARLVDFAGWEMPVQYAGIKAEHEAVRTRAGLFDVSHMGEVAFRGPDAERALQRLLTRDVSRLGEGQAGYAAVCLESGGTVDDVIAYRRGEGFLVVVNAANREKDLAHFRRHTADLDVEISDETEEWALLALQGPEAERLLQPFVAGDLSALGRYRFLETHVDGGEAIVARTGYTGEDGFEVFLRPAEAPSLWRRLVEAGAAPAGLGARDTLRLEAGMCLYGNELDEETTPLEAGISFAVHLHKEEEFVGQRALQRQRERGLRKKLVGFELEGRGIARHGYPVAVGGERAGVVTSGTMSPTLGRAIGLAYVPPETEGGFEVLIRERPVPARIVPLPFYRRKRNDPEGGASG.

The protein belongs to the GcvT family. The glycine cleavage system is composed of four proteins: P, T, L and H.

It carries out the reaction N(6)-[(R)-S(8)-aminomethyldihydrolipoyl]-L-lysyl-[protein] + (6S)-5,6,7,8-tetrahydrofolate = N(6)-[(R)-dihydrolipoyl]-L-lysyl-[protein] + (6R)-5,10-methylene-5,6,7,8-tetrahydrofolate + NH4(+). In terms of biological role, the glycine cleavage system catalyzes the degradation of glycine. The polypeptide is Aminomethyltransferase (Rubrobacter xylanophilus (strain DSM 9941 / JCM 11954 / NBRC 16129 / PRD-1)).